Reading from the N-terminus, the 195-residue chain is Dephospho-CoA kinase (195 aa).

One can recognise a DPCK domain in the interval 4 to 195; that stretch reads IIGLTGGIAS…EQILDALQRL (192 aa). Position 12 to 17 (12 to 17) interacts with ATP; sequence ASGKST.

The protein belongs to the CoaE family.

It is found in the cytoplasm. The catalysed reaction is 3'-dephospho-CoA + ATP = ADP + CoA + H(+). It functions in the pathway cofactor biosynthesis; coenzyme A biosynthesis; CoA from (R)-pantothenate: step 5/5. Functionally, catalyzes the phosphorylation of the 3'-hydroxyl group of dephosphocoenzyme A to form coenzyme A. The sequence is that of Dephospho-CoA kinase from Streptococcus agalactiae serotype III (strain NEM316).